We begin with the raw amino-acid sequence, 583 residues long: CD166 antigen (583 aa).

Positions 1–27 are cleaved as a signal peptide; sequence MESKGASSCRLLFCLLISATVFRPGLG. 2 Ig-like V-type domains span residues 28 to 120 and 125 to 234; these read WYTV…TEDN and PTIV…KTIH. Residues 28 to 527 are Extracellular-facing; that stretch reads WYTVNSAYGD…NREKVNDQAK (500 aa). 2 disulfides stabilise this stretch: C43–C113 and C157–C220. N91, N95, N167, N265, N306, N361, N457, N480, and N499 each carry an N-linked (GlcNAc...) asparagine glycan. 3 consecutive Ig-like C2-type domains span residues 245–328, 333–409, and 416–501; these read PTEQ…TAIT, DLSL…ESLT, and PQIK…LNVS. Intrachain disulfides connect C270–C313, C354–C392, and C435–C485. Residues 528-549 form a helical membrane-spanning segment; the sequence is LIVGIVVGLLLAALVAGVVYWL. Residues 550 to 583 lie on the Cytoplasmic side of the membrane; it reads YMKKSKTASKHVNKDLGNMEENKKLEENNHKTEA. The disordered stretch occupies residues 562–583; it reads NKDLGNMEENKKLEENNHKTEA. Residues 569–583 show a composition bias toward basic and acidic residues; it reads EENKKLEENNHKTEA.

As to quaternary structure, homodimer. Interacts (via extracellular domain) with CD6 (via extracellular domain). Homodimerization and interaction with CD6 involve the same region and cannot occur simultaneously. The affinity for CD6 is much higher than the affinity for self-association. Interacts (via glycosylated extracellular domain) with LGALS1 and LGALS3. Interaction with LGALS1 or LGALS3 inhibits interaction with CD6. Glycosylated. Detected on hematopoietic stem cells derived from umbilical cord blood. Detected on lymph vessel endothelial cells, skin and tonsil. Detected on peripheral blood monocytes. Detected on monocyte-derived dendritic cells (at protein level). Detected at low levels in spleen, placenta, liver. Expressed by activated T-cells, B-cells, monocytes and thymic epithelial cells. Isoform 1 and isoform 3 are detected in vein and artery endothelial cells, astrocytes, keratinocytes and artery smooth muscle cells. Expressed by neurons in the brain. Restricted expression in tumor cell lines. Detected in highly metastasizing melanoma cell lines.

The protein resides in the cell membrane. It is found in the cell projection. It localises to the axon. Its subcellular location is the dendrite. The protein localises to the secreted. Cell adhesion molecule that mediates both heterotypic cell-cell contacts via its interaction with CD6, as well as homotypic cell-cell contacts. Promotes T-cell activation and proliferation via its interactions with CD6. Contributes to the formation and maturation of the immunological synapse via its interactions with CD6. Mediates homotypic interactions with cells that express ALCAM. Acts as a ligand for the LILRB4 receptor, enhancing LILRB4-mediated inhibition of T cell proliferation. Required for normal hematopoietic stem cell engraftment in the bone marrow. Mediates attachment of dendritic cells onto endothelial cells via homotypic interaction. Inhibits endothelial cell migration and promotes endothelial tube formation via homotypic interactions. Required for normal organization of the lymph vessel network. Required for normal hematopoietic stem cell engraftment in the bone marrow. Plays a role in hematopoiesis; required for normal numbers of hematopoietic stem cells in bone marrow. Promotes in vitro osteoblast proliferation and differentiation. Promotes neurite extension, axon growth and axon guidance; axons grow preferentially on surfaces that contain ALCAM. Mediates outgrowth and pathfinding for retinal ganglion cell axons. In terms of biological role, inhibits activities of membrane-bound isoforms by competing for the same interaction partners. Inhibits cell attachment via homotypic interactions. Promotes endothelial cell migration. Inhibits endothelial cell tube formation. The protein is CD166 antigen (ALCAM) of Homo sapiens (Human).